A 364-amino-acid chain; its full sequence is tRNA-specific 2-thiouridylase MnmA 1 (364 aa).

ATP-binding positions include 10–17 (GMSGGVDS) and methionine 36. Catalysis depends on cysteine 106, which acts as the Nucleophile. Cysteine 106 and cysteine 204 are disulfide-bonded. Glycine 130 is an ATP binding site. Positions 154-156 (KDQ) are interaction with tRNA. Cysteine 204 acts as the Cysteine persulfide intermediate in catalysis. Positions 310 to 311 (RY) are interaction with tRNA.

The protein belongs to the MnmA/TRMU family.

It localises to the cytoplasm. The catalysed reaction is S-sulfanyl-L-cysteinyl-[protein] + uridine(34) in tRNA + AH2 + ATP = 2-thiouridine(34) in tRNA + L-cysteinyl-[protein] + A + AMP + diphosphate + H(+). Catalyzes the 2-thiolation of uridine at the wobble position (U34) of tRNA, leading to the formation of s(2)U34. In Caldanaerobacter subterraneus subsp. tengcongensis (strain DSM 15242 / JCM 11007 / NBRC 100824 / MB4) (Thermoanaerobacter tengcongensis), this protein is tRNA-specific 2-thiouridylase MnmA 1.